The primary structure comprises 105 residues: Large ribosomal subunit protein eL36 (105 aa).

The protein belongs to the eukaryotic ribosomal protein eL36 family. As to quaternary structure, component of the large ribosomal subunit.

Its subcellular location is the cytoplasm. The protein resides in the cytosol. In terms of biological role, component of the large ribosomal subunit. The ribosome is a large ribonucleoprotein complex responsible for the synthesis of proteins in the cell. The sequence is that of Large ribosomal subunit protein eL36 (RPL36) from Gallus gallus (Chicken).